A 216-amino-acid chain; its full sequence is 3-isopropylmalate dehydratase small subunit (216 aa).

This sequence belongs to the LeuD family. LeuD type 1 subfamily. Heterodimer of LeuC and LeuD.

The catalysed reaction is (2R,3S)-3-isopropylmalate = (2S)-2-isopropylmalate. It functions in the pathway amino-acid biosynthesis; L-leucine biosynthesis; L-leucine from 3-methyl-2-oxobutanoate: step 2/4. In terms of biological role, catalyzes the isomerization between 2-isopropylmalate and 3-isopropylmalate, via the formation of 2-isopropylmaleate. In Psychrobacter arcticus (strain DSM 17307 / VKM B-2377 / 273-4), this protein is 3-isopropylmalate dehydratase small subunit.